Consider the following 105-residue polypeptide: Antithrombin-III (105 aa).

A signal peptide spans 1–17; sequence MHLFIGVSLRPLGHGIP. Residues 38–105 form a disordered region; it reads ICIYRNPEKK…MRRTSSCRPS (68 aa). Basic and acidic residues predominate over residues 43-53; it reads NPEKKPQERRG.

The protein belongs to the serpin family. In terms of assembly, forms protease inhibiting heterodimer with TMPRSS7. Plasma.

The protein resides in the secreted. The protein localises to the extracellular space. Its function is as follows. Most important serine protease inhibitor in plasma that regulates the blood coagulation cascade. AT-III inhibits thrombin, matriptase-3/TMPRSS7, as well as factors IXa, Xa and XIa. Its inhibitory activity is greatly enhanced in the presence of heparin. The sequence is that of Antithrombin-III (SERPINC1) from Gallus gallus (Chicken).